The primary structure comprises 284 residues: Proteasome subunit beta 1 (284 aa).

The propeptide at 1–54 is removed in mature form; by autocatalysis; the sequence is MAQRDTGGRLGAEFFTPGDSSFTAFLAAHRPALLSTRGLLPDGVRAAPDRVPHG. The active-site Nucleophile is T55. A compositionally biased stretch (basic and acidic residues) spans 256–277; sequence RLPESETEDLSREMVEQRHTRP. Residues 256 to 284 are disordered; it reads RLPESETEDLSREMVEQRHTRPDGPTAAM.

It belongs to the peptidase T1B family. In terms of assembly, the 20S proteasome core is composed of 14 alpha and 14 beta subunits that assemble into four stacked heptameric rings, resulting in a barrel-shaped structure. The two inner rings, each composed of seven catalytic beta subunits, are sandwiched by two outer rings, each composed of seven alpha subunits. The catalytic chamber with the active sites is on the inside of the barrel. Has a gated structure, the ends of the cylinder being occluded by the N-termini of the alpha-subunits. Is capped by the proteasome-associated ATPase, ARC.

It is found in the cytoplasm. The catalysed reaction is Cleavage of peptide bonds with very broad specificity.. Its pathway is protein degradation; proteasomal Pup-dependent pathway. The formation of the proteasomal ATPase ARC-20S proteasome complex, likely via the docking of the C-termini of ARC into the intersubunit pockets in the alpha-rings, may trigger opening of the gate for substrate entry. Interconversion between the open-gate and close-gate conformations leads to a dynamic regulation of the 20S proteasome proteolysis activity. Its function is as follows. Component of the proteasome core, a large protease complex with broad specificity involved in protein degradation. This is Proteasome subunit beta 1 from Streptomyces avermitilis (strain ATCC 31267 / DSM 46492 / JCM 5070 / NBRC 14893 / NCIMB 12804 / NRRL 8165 / MA-4680).